A 328-amino-acid chain; its full sequence is Interleukin-12 subunit beta (328 aa).

Residues Met1–Ala22 form the signal peptide. The Ig-like C2-type domain occupies Asp29–Lys106. A disulfide bridge links Cys50 with Cys90. N-linked (GlcNAc...) asparagine glycans are attached at residues Asn125, Asn135, and Asn222. One can recognise a Fibronectin type-III domain in the interval Pro237–Ser328.

This sequence belongs to the IL-12B family. In terms of assembly, heterodimer with IL12A; disulfide-linked. The heterodimer is known as interleukin IL-12. Heterodimer with IL23A; disulfide-linked. The heterodimer is known as interleukin IL-23. Also secreted as a monomer. Interacts with NBR1; this interaction promotes IL-12 secretion.

The protein resides in the secreted. In terms of biological role, cytokine that can act as a growth factor for activated T and NK cells, enhance the lytic activity of NK/lymphokine-activated killer cells, and stimulate the production of IFN-gamma by resting PBMC. Functionally, associates with IL23A to form the IL-23 interleukin, a heterodimeric cytokine which functions in innate and adaptive immunity. IL-23 may constitute with IL-17 an acute response to infection in peripheral tissues. IL-23 binds to a heterodimeric receptor complex composed of IL12RB1 and IL23R, activates the Jak-Stat signaling cascade, stimulates memory rather than naive T-cells and promotes production of pro-inflammatory cytokines. IL-23 induces autoimmune inflammation and thus may be responsible for autoimmune inflammatory diseases and may be important for tumorigenesis. This Macaca mulatta (Rhesus macaque) protein is Interleukin-12 subunit beta (IL12B).